The chain runs to 1371 residues: DNA-directed RNA polymerase subunit beta' (1371 aa).

4 residues coordinate Zn(2+): Cys71, Cys73, Cys86, and Cys89. Mg(2+)-binding residues include Asp461, Asp463, and Asp465. 4 residues coordinate Zn(2+): Cys803, Cys877, Cys884, and Cys887.

This sequence belongs to the RNA polymerase beta' chain family. The RNAP catalytic core consists of 2 alpha, 1 beta, 1 beta' and 1 omega subunit. When a sigma factor is associated with the core the holoenzyme is formed, which can initiate transcription. Requires Mg(2+) as cofactor. Zn(2+) serves as cofactor.

The enzyme catalyses RNA(n) + a ribonucleoside 5'-triphosphate = RNA(n+1) + diphosphate. Its function is as follows. DNA-dependent RNA polymerase catalyzes the transcription of DNA into RNA using the four ribonucleoside triphosphates as substrates. The sequence is that of DNA-directed RNA polymerase subunit beta' from Thermodesulfovibrio yellowstonii (strain ATCC 51303 / DSM 11347 / YP87).